A 686-amino-acid chain; its full sequence is Translation initiation factor IF-2 (686 aa).

The segment at 35-99 is disordered; the sequence is MSTVEDETAE…EHGQKDTDRR (65 aa). The segment covering 50 to 68 has biased composition (basic and acidic residues); that stretch reads LQEEDKPEEKISKKEPDKK. A compositionally biased stretch (basic residues) spans 69-79; that stretch reads DRKKTKGKKQM. Over residues 87–99 the composition is skewed to basic and acidic residues; that stretch reads EGTEHGQKDTDRR. The 170-residue stretch at 186–355 folds into the tr-type G domain; the sequence is LRPPIVTVMG…LLVAEMEELK (170 aa). The G1 stretch occupies residues 195-202; sequence GHVDHGKT. Residue 195–202 participates in GTP binding; sequence GHVDHGKT. Residues 220-224 form a G2 region; that stretch reads GITQH. Residues 241–244 are G3; the sequence is DTPG. Residues 241-245 and 295-298 each bind GTP; these read DTPGH and NKVD. Residues 295-298 form a G4 region; that stretch reads NKVD. The interval 331–333 is G5; sequence SAL.

This sequence belongs to the TRAFAC class translation factor GTPase superfamily. Classic translation factor GTPase family. IF-2 subfamily.

The protein resides in the cytoplasm. In terms of biological role, one of the essential components for the initiation of protein synthesis. Protects formylmethionyl-tRNA from spontaneous hydrolysis and promotes its binding to the 30S ribosomal subunits. Also involved in the hydrolysis of GTP during the formation of the 70S ribosomal complex. The sequence is that of Translation initiation factor IF-2 from Halothermothrix orenii (strain H 168 / OCM 544 / DSM 9562).